The chain runs to 1241 residues: ATP-dependent helicase/nuclease subunit A (1241 aa).

A UvrD-like helicase ATP-binding domain is found at 12-485 (SQWTDDQWKA…IDLAKNFRSR (474 aa)). 33-40 (AAAGSGKT) contacts ATP. The UvrD-like helicase C-terminal domain maps to 505 to 805 (GEIDYDADAE…RIMTIHKSKG (301 aa)).

Belongs to the helicase family. AddA subfamily. As to quaternary structure, heterodimer of AddA and AddB/RexB. Mg(2+) serves as cofactor.

It carries out the reaction Couples ATP hydrolysis with the unwinding of duplex DNA by translocating in the 3'-5' direction.. The catalysed reaction is ATP + H2O = ADP + phosphate + H(+). Its function is as follows. The heterodimer acts as both an ATP-dependent DNA helicase and an ATP-dependent, dual-direction single-stranded exonuclease. Recognizes the chi site generating a DNA molecule suitable for the initiation of homologous recombination. The AddA nuclease domain is required for chi fragment generation; this subunit has the helicase and 3' -&gt; 5' nuclease activities. This chain is ATP-dependent helicase/nuclease subunit A, found in Bacillus thuringiensis subsp. konkukian (strain 97-27).